We begin with the raw amino-acid sequence, 162 residues long: NADH-quinone oxidoreductase subunit I (162 aa).

4Fe-4S ferredoxin-type domains lie at 53 to 83 (LRRY…IDSE) and 93 to 122 (TRYD…ETRI). Residues cysteine 63, cysteine 66, cysteine 69, cysteine 73, cysteine 102, cysteine 105, cysteine 108, and cysteine 112 each coordinate [4Fe-4S] cluster.

Belongs to the complex I 23 kDa subunit family. In terms of assembly, NDH-1 is composed of 14 different subunits. Subunits NuoA, H, J, K, L, M, N constitute the membrane sector of the complex. [4Fe-4S] cluster serves as cofactor.

It is found in the cell inner membrane. The enzyme catalyses a quinone + NADH + 5 H(+)(in) = a quinol + NAD(+) + 4 H(+)(out). Its function is as follows. NDH-1 shuttles electrons from NADH, via FMN and iron-sulfur (Fe-S) centers, to quinones in the respiratory chain. The immediate electron acceptor for the enzyme in this species is believed to be ubiquinone. Couples the redox reaction to proton translocation (for every two electrons transferred, four hydrogen ions are translocated across the cytoplasmic membrane), and thus conserves the redox energy in a proton gradient. This chain is NADH-quinone oxidoreductase subunit I, found in Thiobacillus denitrificans (strain ATCC 25259 / T1).